Here is a 214-residue protein sequence, read N- to C-terminus: Membrane antigen containing repeating peptides (214 aa).

4 repeat units span residues 1–14 (QETSAKLADTEETL), 15–28 (QETSAKLADTEETL), 29–42 (QETSAKLADTEETL), and 43–56 (QETSAKLADTEETL). Residues 1–31 (QETSAKLADTEETLQETSAKLADTEETLQET) form a disordered region. Positions 1–56 (QETSAKLADTEETLQETSAKLADTEETLQETSAKLADTEETLQETSAKLADTEETL) are 4 X 14 AA tandem repeats. The segment at 180–214 (CSLHPTPRRLGDVSNRENSIENKTRSASRLSGRLF) is disordered. The span at 188-203 (RLGDVSNRENSIENKT) shows a compositional bias: basic and acidic residues.

Its subcellular location is the membrane. The sequence is that of Membrane antigen containing repeating peptides from Leishmania major.